The sequence spans 234 residues: Lactate utilization protein C 1 (234 aa).

This sequence belongs to the LutC/YkgG family.

Its function is as follows. Is involved in L-lactate degradation and allows cells to grow with lactate as the sole carbon source. This Bacillus mycoides (strain KBAB4) (Bacillus weihenstephanensis) protein is Lactate utilization protein C 1.